The sequence spans 263 residues: 4-hydroxy-2-oxo-heptane-1,7-dioate aldolase (263 aa).

The Proton acceptor role is filled by His45. Gln147 serves as a coordination point for substrate. Glu149 contacts a divalent metal cation. The substrate site is built by Ala174 and Asp175. An a divalent metal cation-binding site is contributed by Asp175.

It belongs to the HpcH/HpaI aldolase family. In terms of assembly, homohexamer; trimer of dimers. Requires a divalent metal cation as cofactor.

The catalysed reaction is 4-hydroxy-2-oxoheptanedioate = succinate semialdehyde + pyruvate. It functions in the pathway aromatic compound metabolism; 4-hydroxyphenylacetate degradation; pyruvate and succinate semialdehyde from 4-hydroxyphenylacetate: step 7/7. Its function is as follows. Catalyzes the reversible retro-aldol cleavage of 4-hydroxy-2-ketoheptane-1,7-dioate (HKHD) to pyruvate and succinic semialdehyde. This is 4-hydroxy-2-oxo-heptane-1,7-dioate aldolase from Salmonella heidelberg (strain SL476).